Here is a 297-residue protein sequence, read N- to C-terminus: Aspartate carbamoyltransferase catalytic subunit (297 aa).

Carbamoyl phosphate is bound by residues arginine 48 and threonine 49. Lysine 76 contacts L-aspartate. Residues arginine 98, histidine 129, and glutamine 132 each coordinate carbamoyl phosphate. Residues arginine 162 and arginine 214 each coordinate L-aspartate. Alanine 257 and proline 258 together coordinate carbamoyl phosphate.

The protein belongs to the aspartate/ornithine carbamoyltransferase superfamily. ATCase family. Heterododecamer (2C3:3R2) of six catalytic PyrB chains organized as two trimers (C3), and six regulatory PyrI chains organized as three dimers (R2).

The enzyme catalyses carbamoyl phosphate + L-aspartate = N-carbamoyl-L-aspartate + phosphate + H(+). Its pathway is pyrimidine metabolism; UMP biosynthesis via de novo pathway; (S)-dihydroorotate from bicarbonate: step 2/3. Its function is as follows. Catalyzes the condensation of carbamoyl phosphate and aspartate to form carbamoyl aspartate and inorganic phosphate, the committed step in the de novo pyrimidine nucleotide biosynthesis pathway. The chain is Aspartate carbamoyltransferase catalytic subunit from Leuconostoc mesenteroides subsp. mesenteroides (strain ATCC 8293 / DSM 20343 / BCRC 11652 / CCM 1803 / JCM 6124 / NCDO 523 / NBRC 100496 / NCIMB 8023 / NCTC 12954 / NRRL B-1118 / 37Y).